A 409-amino-acid chain; its full sequence is Peptidase T (409 aa).

H78 provides a ligand contact to Zn(2+). D80 is a catalytic residue. Residue D140 participates in Zn(2+) binding. The active-site Proton acceptor is E173. 3 residues coordinate Zn(2+): E174, D196, and H379.

It belongs to the peptidase M20B family. Zn(2+) serves as cofactor.

It localises to the cytoplasm. The enzyme catalyses Release of the N-terminal residue from a tripeptide.. Functionally, cleaves the N-terminal amino acid of tripeptides. This chain is Peptidase T, found in Salmonella paratyphi A (strain ATCC 9150 / SARB42).